The following is a 5162-amino-acid chain: Linear gramicidin synthase subunit B (5162 aa).

4 Carrier domains span residues 963-1038, 2027-2101, 3541-3616, and 4601-4675; these read APRN…QALR, EPQS…VVLE, APRN…GAIG, and AATS…GQST. O-(pantetheine 4'-phosphoryl)serine occurs at positions 998, 2062, 3576, and 4636.

It belongs to the ATP-dependent AMP-binding enzyme family. In terms of assembly, large multienzyme complex composed of 4 subunits; LgrA, LgrB, LgrC and LgrD. Requires pantetheine 4'-phosphate as cofactor.

Its function is as follows. Activates the 3rd to 6th amino acids (Ala, D-Leu, Ala and D-Val) in linear gramicidin and catalyzes the formation of the peptide bond between them. This enzyme is also responsible for the epimerization of the 4th (D-Leu) and the 6th (D-Val) amino acids. In Brevibacillus parabrevis, this protein is Linear gramicidin synthase subunit B (lgrB).